We begin with the raw amino-acid sequence, 227 residues long: Cytochrome c oxidase subunit 2 (227 aa).

Over 1–14 (MAYPFQLGFQDATS) the chain is Mitochondrial intermembrane. Residues 15–45 (PIMEELLHFHDHTLMIVFLISSLVLYIISSM) form a helical membrane-spanning segment. The Mitochondrial matrix portion of the chain corresponds to 46 to 59 (LTTKLTHTSTMDAQ). The helical transmembrane segment at 60 to 87 (EVETIWTILPAIILILIALPSLRILYMM) threads the bilayer. The Mitochondrial intermembrane segment spans residues 88 to 227 (DEINNPSLTV…YFEEWSASML (140 aa)). Cu cation is bound by residues H161, C196, E198, C200, H204, and M207. Mg(2+) is bound at residue E198.

The protein belongs to the cytochrome c oxidase subunit 2 family. Component of the cytochrome c oxidase (complex IV, CIV), a multisubunit enzyme composed of 14 subunits. The complex is composed of a catalytic core of 3 subunits MT-CO1, MT-CO2 and MT-CO3, encoded in the mitochondrial DNA, and 11 supernumerary subunits COX4I, COX5A, COX5B, COX6A, COX6B, COX6C, COX7A, COX7B, COX7C, COX8 and NDUFA4, which are encoded in the nuclear genome. The complex exists as a monomer or a dimer and forms supercomplexes (SCs) in the inner mitochondrial membrane with NADH-ubiquinone oxidoreductase (complex I, CI) and ubiquinol-cytochrome c oxidoreductase (cytochrome b-c1 complex, complex III, CIII), resulting in different assemblies (supercomplex SCI(1)III(2)IV(1) and megacomplex MCI(2)III(2)IV(2)). Found in a complex with TMEM177, COA6, COX18, COX20, SCO1 and SCO2. Interacts with TMEM177 in a COX20-dependent manner. Interacts with COX20. Interacts with COX16. The cofactor is Cu cation.

Its subcellular location is the mitochondrion inner membrane. It catalyses the reaction 4 Fe(II)-[cytochrome c] + O2 + 8 H(+)(in) = 4 Fe(III)-[cytochrome c] + 2 H2O + 4 H(+)(out). Functionally, component of the cytochrome c oxidase, the last enzyme in the mitochondrial electron transport chain which drives oxidative phosphorylation. The respiratory chain contains 3 multisubunit complexes succinate dehydrogenase (complex II, CII), ubiquinol-cytochrome c oxidoreductase (cytochrome b-c1 complex, complex III, CIII) and cytochrome c oxidase (complex IV, CIV), that cooperate to transfer electrons derived from NADH and succinate to molecular oxygen, creating an electrochemical gradient over the inner membrane that drives transmembrane transport and the ATP synthase. Cytochrome c oxidase is the component of the respiratory chain that catalyzes the reduction of oxygen to water. Electrons originating from reduced cytochrome c in the intermembrane space (IMS) are transferred via the dinuclear copper A center (CU(A)) of subunit 2 and heme A of subunit 1 to the active site in subunit 1, a binuclear center (BNC) formed by heme A3 and copper B (CU(B)). The BNC reduces molecular oxygen to 2 water molecules using 4 electrons from cytochrome c in the IMS and 4 protons from the mitochondrial matrix. The protein is Cytochrome c oxidase subunit 2 (MT-CO2) of Equus asinus (Donkey).